The chain runs to 172 residues: uncharacterized protein (172 aa).

The segment covering 1-17 (MISLDKDENEIEHHNEE) has biased composition (basic and acidic residues). The tract at residues 1-27 (MISLDKDENEIEHHNEENSLVEQETAP) is disordered. The chain crosses the membrane as a helical span at residues 129 to 151 (IVTVLIGIIVAIFVLVVIGIAAF).

The protein localises to the membrane. This is an uncharacterized protein from Bacillus subtilis (strain 168).